The primary structure comprises 329 residues: 4-hydroxythreonine-4-phosphate dehydrogenase (329 aa).

His-136 and Thr-137 together coordinate substrate. The a divalent metal cation site is built by His-166, His-211, and His-266. Lys-274, Asn-283, and Arg-292 together coordinate substrate.

This sequence belongs to the PdxA family. As to quaternary structure, homodimer. Zn(2+) serves as cofactor. It depends on Mg(2+) as a cofactor. Requires Co(2+) as cofactor.

It localises to the cytoplasm. It catalyses the reaction 4-(phosphooxy)-L-threonine + NAD(+) = 3-amino-2-oxopropyl phosphate + CO2 + NADH. It participates in cofactor biosynthesis; pyridoxine 5'-phosphate biosynthesis; pyridoxine 5'-phosphate from D-erythrose 4-phosphate: step 4/5. Catalyzes the NAD(P)-dependent oxidation of 4-(phosphooxy)-L-threonine (HTP) into 2-amino-3-oxo-4-(phosphooxy)butyric acid which spontaneously decarboxylates to form 3-amino-2-oxopropyl phosphate (AHAP). In Shigella boydii serotype 4 (strain Sb227), this protein is 4-hydroxythreonine-4-phosphate dehydrogenase.